Consider the following 102-residue polypeptide: Co-chaperonin GroES (102 aa).

Belongs to the GroES chaperonin family. In terms of assembly, heptamer of 7 subunits arranged in a ring. Interacts with the chaperonin GroEL.

It localises to the cytoplasm. Together with the chaperonin GroEL, plays an essential role in assisting protein folding. The GroEL-GroES system forms a nano-cage that allows encapsulation of the non-native substrate proteins and provides a physical environment optimized to promote and accelerate protein folding. GroES binds to the apical surface of the GroEL ring, thereby capping the opening of the GroEL channel. The sequence is that of Co-chaperonin GroES from Chlamydia felis (strain Fe/C-56) (Chlamydophila felis).